The following is a 700-amino-acid chain: Putative ankyrin repeat protein FPV018 (700 aa).

11 ANK repeats span residues 29-59, 63-92, 126-155, 204-233, 236-265, 270-299, 301-332, 395-424, 428-457, 461-490, and 494-523; these read DRLLSLHNILKENNVDRLRELIESDKDVINM, NRLLPLHIAIEHSDIEIVEMLLDNNAVING, RIRRLLTVNNTEKYTKIVKLLIKHGADLKM, MRRITIKCAIRAVNIELVKHFISNNLLADT, ALEDYFLEAVKTNSPKMVKLFLDSGIDINS, NSHTALYHAVEQENVTLVMLLLNHGADPDI, DIYSMLKYAIMSSKHGVKLFNILVKNGARIRC, CNMYPIHAAVSINTSRLTRLLINKGADVNV, YGKTPIHLACMYSKIGNIKVLIKNGANVNE, YGITPLMICSREGKVSNMEYLLANGADVNQ, and DKNTALTYAIRNKSKECTRVLLEHGADMCF.

In Fowlpox virus (strain NVSL) (FPV), this protein is Putative ankyrin repeat protein FPV018.